Here is a 302-residue protein sequence, read N- to C-terminus: 4-hydroxy-tetrahydrodipicolinate synthase (302 aa).

Position 56 (Thr-56) interacts with pyruvate. Tyr-145 functions as the Proton donor/acceptor in the catalytic mechanism. Catalysis depends on Lys-173, which acts as the Schiff-base intermediate with substrate. Pyruvate is bound at residue Val-215.

This sequence belongs to the DapA family. Homotetramer; dimer of dimers.

It is found in the cytoplasm. It catalyses the reaction L-aspartate 4-semialdehyde + pyruvate = (2S,4S)-4-hydroxy-2,3,4,5-tetrahydrodipicolinate + H2O + H(+). It functions in the pathway amino-acid biosynthesis; L-lysine biosynthesis via DAP pathway; (S)-tetrahydrodipicolinate from L-aspartate: step 3/4. In terms of biological role, catalyzes the condensation of (S)-aspartate-beta-semialdehyde [(S)-ASA] and pyruvate to 4-hydroxy-tetrahydrodipicolinate (HTPA). The chain is 4-hydroxy-tetrahydrodipicolinate synthase from Prochlorococcus marinus subsp. pastoris (strain CCMP1986 / NIES-2087 / MED4).